We begin with the raw amino-acid sequence, 482 residues long: C3a anaphylatoxin chemotactic receptor (482 aa).

Over 1 to 23 (MASFSAETNSTDLLSQPWNEPPV) the chain is Extracellular. The N-linked (GlcNAc...) asparagine glycan is linked to Asn9. A helical transmembrane segment spans residues 24-46 (ILSMVILSLTFLLGLPGNGLVLW). Residues 47 to 57 (VAGLKMQRTVN) are Cytoplasmic-facing. A helical transmembrane segment spans residues 58 to 80 (TVWFLHLTLADLLCCLSLPFSLA). At 81 to 96 (HLALQGQWPYGRFLCE) the chain is on the extracellular side. A disulfide bridge connects residues Cys95 and Cys172. A helical transmembrane segment spans residues 97–118 (LIPSIIVLNMFASVFLLTAISL). The Cytoplasmic segment spans residues 119–139 (DRCLVVFKPIWCQNHRNVGTA). Residues 140-160 (CSICGCIWVVAFVMCIPVFVY) traverse the membrane as a helical segment. Residues 161–340 (REIFTADNHN…TPLVAITITR (180 aa)) are Extracellular-facing. 2 positions are modified to sulfotyrosine: Tyr174 and Tyr184. Asn194 is a glycosylation site (N-linked (GlcNAc...) asparagine). Tyr318 carries the sulfotyrosine modification. Residues 341-360 (LVVGFLLPSVIMIACYSFIV) form a helical membrane-spanning segment. At 361 to 377 (FRMQRGRFAKSQSKTFR) the chain is on the cytoplasmic side. Residues 378–400 (VAVVVVAVFLVCWTPYHIFGVLS) form a helical membrane-spanning segment. Topologically, residues 401-417 (LLIDPESPLGKTLMSWD) are extracellular. A helical transmembrane segment spans residues 418-438 (HVSIALASANSCFNPFLYALL). Residues 439 to 482 (GKDFRKKARQSIQGILEAAFSEELTRSTHCNSNNVFSERNSTTV) are Cytoplasmic-facing. Ser459 is subject to Phosphoserine. Residue Thr463 is modified to Phosphothreonine.

It belongs to the G-protein coupled receptor 1 family. Interacts with VGF-derived peptide TLQP-21. Post-translationally, among the sulfation sites Tyr-174 is essential for binding of C3a anaphylatoxin.

Its subcellular location is the cell membrane. Receptor for the chemotactic and inflammatory peptide anaphylatoxin C3a. This receptor stimulates chemotaxis, granule enzyme release and superoxide anion production. The protein is C3a anaphylatoxin chemotactic receptor (C3AR1) of Pongo abelii (Sumatran orangutan).